Here is a 258-residue protein sequence, read N- to C-terminus: Snake venom serine protease KN13 (258 aa).

The first 18 residues, 1 to 18, serve as a signal peptide directing secretion; it reads MVLIRVLANLLILQLSYA. A propeptide spanning residues 19–24 is cleaved from the precursor; it reads QRSSEL. In terms of domain architecture, Peptidase S1 spans 25–249; the sequence is VIGGDECNIN…HLDWIQNIIA (225 aa). 6 disulfides stabilise this stretch: Cys31-Cys163, Cys50-Cys66, Cys98-Cys256, Cys142-Cys210, Cys174-Cys189, and Cys200-Cys225. The active-site Charge relay system is the His65. Asn103 carries N-linked (GlcNAc...) asparagine glycosylation. Asp110 (charge relay system) is an active-site residue. 4 N-linked (GlcNAc...) asparagine glycosylation sites follow: Asn121, Asn122, Asn154, and Asn170. Residue Ser204 is the Charge relay system of the active site. A glycan (N-linked (GlcNAc...) asparagine) is linked at Asn251.

It belongs to the peptidase S1 family. Snake venom subfamily. In terms of assembly, monomer. Expressed by the venom gland.

Its subcellular location is the secreted. Snake venom serine protease that may act in the hemostasis system of the prey. The protein is Snake venom serine protease KN13 of Trimeresurus stejnegeri (Chinese green tree viper).